We begin with the raw amino-acid sequence, 495 residues long: UDP-glycosyltransferase 73C11 (495 aa).

The active-site Proton acceptor is histidine 24. An anthocyanidin is bound at residue histidine 24. Catalysis depends on aspartate 129, which acts as the Charge relay. 6 residues coordinate UDP-alpha-D-glucose: glutamine 358, histidine 373, tryptophan 376, asparagine 377, serine 378, and glutamate 381. An an anthocyanidin-binding site is contributed by glycine 396. UDP-alpha-D-glucose-binding residues include aspartate 397 and glutamine 398.

This sequence belongs to the UDP-glycosyltransferase family.

The enzyme catalyses oleanolate + UDP-alpha-D-glucose = oleanolate 3-O-beta-D-glucoside + UDP + H(+). In terms of biological role, catalyzes the transfer of a glucose (Glc) moiety from UDP-Glc to the C-3 position of the oleanane sapogenins oleanolate and hederagenin, and to the C-28 carboxylic group of the lupane sapogenin betulinate. The monoglucosylated hederagenin 3-O-beta-D-glucoside is a feeding deterrent of the yellow-striped flea beetle (Phyllotreta nemorum). The polypeptide is UDP-glycosyltransferase 73C11 (Barbarea vulgaris (Yellow rocket)).